A 455-amino-acid polypeptide reads, in one-letter code: MLTCNDCSTWEQFVNYIKTRCSKTAFENWIAPIQVLEESSEKIRLEIPNIFVQSYLLDNYKKDLCSFVPLDAEGNPALEFVVAEIKRSSPLVTPSIAKPATEVSEENKDFQLKLNGAYRFDNFIEGPSNQFVKSAALGIAARPGRSYNPLFIHGGVGLGKTHLLHAVGHYVREHHKNLRIHCITTEAFINDLVHHLRVKSIDKMKNFYRSLDLLLVDDIQFLQNRQNFEEEFCNTFETLIHLSKQIVVTSDKPPGQLKLSERIIARMEWGLVAHVGVPDLETRVAILQHKAEQKGLNIPNEIAFYIADHVYGNVRQLEGAINKLTAYCLLFNKPLTETTVRDTLKELFRAPSKQKVSVESILKSVATVFQVKIQDLKGSSRAKNVPLARQVAMYLAKTLITDSLVAIGAAFGKTHSTVLYACKTIEQKIEKDALLKNQISLCKNNIAIDSPQHFV.

Residues 1 to 95 (MLTCNDCSTW…KRSSPLVTPS (95 aa)) are domain I, interacts with DnaA modulators. A domain II region spans residues 96 to 112 (IAKPATEVSEENKDFQL). Residues 113-328 (KLNGAYRFDN…GAINKLTAYC (216 aa)) are domain III, AAA+ region. ATP contacts are provided by Gly157, Gly159, Lys160, and Thr161. Residues 329-455 (LLFNKPLTET…IAIDSPQHFV (127 aa)) form a domain IV, binds dsDNA region.

The protein belongs to the DnaA family. In terms of assembly, oligomerizes as a right-handed, spiral filament on DNA at oriC.

Its subcellular location is the cytoplasm. Plays an essential role in the initiation and regulation of chromosomal replication. ATP-DnaA binds to the origin of replication (oriC) to initiate formation of the DNA replication initiation complex once per cell cycle. Binds the DnaA box (a 9 base pair repeat at the origin) and separates the double-stranded (ds)DNA. Forms a right-handed helical filament on oriC DNA; dsDNA binds to the exterior of the filament while single-stranded (ss)DNA is stabiized in the filament's interior. The ATP-DnaA-oriC complex binds and stabilizes one strand of the AT-rich DNA unwinding element (DUE), permitting loading of DNA polymerase. After initiation quickly degrades to an ADP-DnaA complex that is not apt for DNA replication. Binds acidic phospholipids. This Chlamydia trachomatis serovar D (strain ATCC VR-885 / DSM 19411 / UW-3/Cx) protein is Chromosomal replication initiator protein DnaA 2.